The primary structure comprises 174 residues: ATP synthase subunit d, mitochondrial (174 aa).

Ser2 is modified (N-acetylserine).

This sequence belongs to the ATPase d subunit family.

It localises to the mitochondrion inner membrane. In terms of biological role, mitochondrial membrane ATP synthase (F(1)F(0) ATP synthase or Complex V) produces ATP from ADP in the presence of a proton gradient across the membrane which is generated by electron transport complexes of the respiratory chain. F-type ATPases consist of two structural domains, F(1) - containing the extramembraneous catalytic core, and F(0) - containing the membrane proton channel, linked together by a central stalk and a peripheral stalk. During catalysis, ATP synthesis in the catalytic domain of F(1) is coupled via a rotary mechanism of the central stalk subunits to proton translocation. Part of the complex F(0) domain and the peripheric stalk, which acts as a stator to hold the catalytic alpha(3)beta(3) subcomplex and subunit a/ATP6 static relative to the rotary elements. The sequence is that of ATP synthase subunit d, mitochondrial (ATP7) from Kluyveromyces lactis (strain ATCC 8585 / CBS 2359 / DSM 70799 / NBRC 1267 / NRRL Y-1140 / WM37) (Yeast).